An 83-amino-acid chain; its full sequence is RNA-binding protein Hfq (83 aa).

The 60-residue stretch at 9 to 68 folds into the Sm domain; sequence DPYLNALRKERIPVSIFLVNGIKLQGQIESFDQFVILLKNTVSQMVYKHAISTVVPARNV.

Belongs to the Hfq family. In terms of assembly, homohexamer.

RNA chaperone that binds small regulatory RNA (sRNAs) and mRNAs to facilitate mRNA translational regulation in response to envelope stress, environmental stress and changes in metabolite concentrations. Also binds with high specificity to tRNAs. The chain is RNA-binding protein Hfq from Marinobacter nauticus (strain ATCC 700491 / DSM 11845 / VT8) (Marinobacter aquaeolei).